The sequence spans 310 residues: Protein RL1 (310 aa).

Over residues 1-12 (MPATDTNSTHTT) the composition is skewed to polar residues. The tract at residues 1-44 (MPATDTNSTHTTPLHPEDQHTLPLHHSTTQPHVQTSDKHADKQH) is disordered. Residues 35–44 (TSDKHADKQH) are compositionally biased toward basic and acidic residues. Positions 153 to 159 (LLLARQR) are involved in the interaction with host DDB1. Residues 205-252 (ERPSAGEAQARGLLPRIRITPISTSPRPKPPQPTTSTASHPHATARPD) are disordered. Residues 238 to 248 (TTSTASHPHAT) are compositionally biased toward low complexity.

Belongs to the HHV-5 HKLF1 family. As to quaternary structure, interacts with host adaptor protein DDB1; this interaction allows RL1 to recruit the cullin4-RING E3 ubiquitin ligase (CRL4) complex and promote SLN11 degradation.

In terms of biological role, degrades the host antiviral factor SLFN11 via the cullin4-RING E3 ubiquitin ligase (CRL4) complex. The sequence is that of Protein RL1 (RL1) from Human cytomegalovirus (strain Merlin) (HHV-5).